The following is a 284-amino-acid chain: Insulin-like growth factor-binding protein 2 (284 aa).

The N-terminal stretch at 1–21 (MGLSRYLLGLLLGVLCTPAPA) is a signal peptide. The region spanning 23–106 (VLFRCPPCSP…VLGLGTCGKR (84 aa)) is the IGFBP N-terminal domain. 6 cysteine pairs are disulfide-bonded: Cys27–Cys56, Cys30–Cys58, Cys38–Cys59, Cys47–Cys62, Cys70–Cys83, and Cys77–Cys103. The tract at residues 108 to 184 (DTEYGSSQER…KSEDKKRPAR (77 aa)) is disordered. Residues 117–127 (RGTELPEERSD) show a composition bias toward basic and acidic residues. The span at 136–145 (EAGPAVAGEA) shows a compositional bias: low complexity. Residues 152–180 (KKEMKEIAVTRERANEQQRSKSNKSEDKK) show a composition bias toward basic and acidic residues. In terms of domain architecture, Thyroglobulin type-1 spans 184 to 266 (RSLCQLQLDQ…SPTIRGDPEC (83 aa)). 3 disulfides stabilise this stretch: Cys187–Cys221, Cys232–Cys243, and Cys245–Cys266. The Cell attachment site motif lies at 261-263 (RGD).

Interacts with igf1 and igf2.

The protein localises to the secreted. Functionally, IGF-binding proteins prolong the half-life of the IGFs and have been shown to either inhibit or stimulate the growth promoting effects of the IGFs on cell culture. They alter the interaction of IGFs with their cell surface receptors. In Xenopus tropicalis (Western clawed frog), this protein is Insulin-like growth factor-binding protein 2.